A 469-amino-acid polypeptide reads, in one-letter code: Glutamate--tRNA ligase (469 aa).

Positions 9–19 (PSPTGFLHVGG) match the 'HIGH' region motif. Zn(2+) contacts are provided by Cys-98, Cys-100, Cys-125, and Asp-127. The 'KMSKS' region motif lies at 236-240 (KLSKR). An ATP-binding site is contributed by Lys-239.

The protein belongs to the class-I aminoacyl-tRNA synthetase family. Glutamate--tRNA ligase type 1 subfamily. In terms of assembly, monomer. Zn(2+) serves as cofactor.

The protein resides in the cytoplasm. The enzyme catalyses tRNA(Glu) + L-glutamate + ATP = L-glutamyl-tRNA(Glu) + AMP + diphosphate. Catalyzes the attachment of glutamate to tRNA(Glu) in a two-step reaction: glutamate is first activated by ATP to form Glu-AMP and then transferred to the acceptor end of tRNA(Glu). This chain is Glutamate--tRNA ligase, found in Shewanella sp. (strain W3-18-1).